The chain runs to 81 residues: Acyl carrier protein (81 aa).

One can recognise a Carrier domain in the interval 4 to 79; sequence QEIFEKVQTI…QAVDFISQKV (76 aa). The residue at position 39 (serine 39) is an O-(pantetheine 4'-phosphoryl)serine.

This sequence belongs to the acyl carrier protein (ACP) family. Post-translationally, 4'-phosphopantetheine is transferred from CoA to a specific serine of apo-ACP by AcpS. This modification is essential for activity because fatty acids are bound in thioester linkage to the sulfhydryl of the prosthetic group.

The protein localises to the plastid. Its subcellular location is the chloroplast. The protein operates within lipid metabolism; fatty acid biosynthesis. Functionally, carrier of the growing fatty acid chain in fatty acid biosynthesis. This is Acyl carrier protein from Guillardia theta (Cryptophyte).